Reading from the N-terminus, the 376-residue chain is Proteasome-interacting protein CIC1 (376 aa).

Disordered stretches follow at residues 1 to 29 (MAKKSNSKKSTPVSTPSKEKKKVIEKKSS) and 356 to 376 (RSSSELEKESSESEAVKKAKS). A required for interaction with CDC4 region spans residues 310 to 376 (ETHEDDMVTI…ESEAVKKAKS (67 aa)). Basic and acidic residues predominate over residues 357–376 (SSSELEKESSESEAVKKAKS).

As to quaternary structure, interacts with CDC4, PRE4, PRE6, RPT1 and SCL1 as part of the fully assembled 26S proteasome. Interacts with pre-ribosomal particles constituent NOP7.

It localises to the nucleus. The protein resides in the nucleolus. In terms of biological role, an adapter protein that specifically links the 26S proteasome to its substrate CDC4 which is one of the substrate recognition subunits of the SCF E3 ubiquitin ligase complex. Required for turnover of cell cycle regulatory proteins CDC4 and GRR1. Required for synthesis and nuclear export of 60S ribosomal subunits. Required for vegetative growth. This is Proteasome-interacting protein CIC1 (CIC1) from Saccharomyces cerevisiae (strain ATCC 204508 / S288c) (Baker's yeast).